We begin with the raw amino-acid sequence, 316 residues long: Secondary metabolism regulator LAE1 (316 aa).

Belongs to the methyltransferase superfamily. LaeA methyltransferase family. In terms of assembly, component of the heterotrimeric velvet complex composed of LAE1, VEL1 and VEL2; VEL1 acting as a bridging protein between LAE1 and VEL2. Interacts with VEL1.

The protein resides in the nucleus. The catalysed reaction is L-methionyl-[protein] + S-adenosyl-L-methionine = S-methyl-L-methionyl-[protein] + S-adenosyl-L-homocysteine. In terms of biological role, methyltransferase that performs automethylation. No other methyl-accepting substrate has been identified yet. Component of the velvet transcription factor complex that acts as a global regulator for secondary metabolite gene expression. Controls the expression of the gibberellins gene clusters, but does not affect bikaverin production. Controls the expression of the fusaric acid gene cluster. Acts as a virulence factors during infection, most likely through activation of gibberellins biosynthesis. This Gibberella fujikuroi (strain CBS 195.34 / IMI 58289 / NRRL A-6831) (Bakanae and foot rot disease fungus) protein is Secondary metabolism regulator LAE1.